A 614-amino-acid chain; its full sequence is DBH-like monooxygenase protein 1 homolog (614 aa).

The first 22 residues, 1–22, serve as a signal peptide directing secretion; it reads MSENKLFCAIVFLTSLFCSTCS. Residues 23–593 are Lumenal-facing; the sequence is QGTRFVHSAA…CRKDSAIQCE (571 aa). The DOMON domain occupies 37 to 150; that stretch reads RRYNIKWGFD…STVRVIWAFH (114 aa). N-linked (GlcNAc...) asparagine glycosylation is present at asparagine 116. The active site involves tyrosine 205. Intrachain disulfides connect cysteine 207-cysteine 259 and cysteine 244-cysteine 271. Positions 237 and 238 each coordinate Cu cation. Asparagine 249 carries N-linked (GlcNAc...) asparagine glycosylation. Histidine 309, histidine 391, and histidine 393 together coordinate Cu cation. 3 cysteine pairs are disulfide-bonded: cysteine 366-cysteine 482, cysteine 370-cysteine 552, and cysteine 445-cysteine 467. Histidine 391 is an active-site residue. A glycan (N-linked (GlcNAc...) asparagine) is linked at asparagine 454. Residue methionine 466 coordinates Cu cation. Asparagine 519 is a glycosylation site (N-linked (GlcNAc...) asparagine). Residues 594–612 form a helical membrane-spanning segment; sequence HSLALLLTACLLLILQTCL.

This sequence belongs to the copper type II ascorbate-dependent monooxygenase family. The cofactor is Cu(2+).

It localises to the endoplasmic reticulum membrane. This Danio rerio (Zebrafish) protein is DBH-like monooxygenase protein 1 homolog (moxd1).